Reading from the N-terminus, the 191-residue chain is uncharacterized protein (191 aa).

This is an uncharacterized protein from Treponema pallidum (strain Nichols).